We begin with the raw amino-acid sequence, 78 residues long: Vacuolar ATPase assembly integral membrane protein VMA21 (78 aa).

Topologically, residues 1–14 are cytoplasmic; that stretch reads MPADIPKSVVQKLV. Residues 15–35 form a helical membrane-spanning segment; the sequence is FFTAAMIICPVATFFICQYLF. At 36–38 the chain is on the lumenal side; that stretch reads SNN. A helical transmembrane segment spans residues 39 to 59; that stretch reads AIISGGVSALVANIVLIGYVV. The Cytoplasmic segment spans residues 60-78; it reads AAFMEDTTEQEPEETKKSR. Residues 75-78 carry the Prevents secretion from ER motif; the sequence is KKSR.

This sequence belongs to the VMA21 family.

It localises to the endoplasmic reticulum membrane. Its subcellular location is the endoplasmic reticulum-Golgi intermediate compartment membrane. It is found in the cytoplasmic vesicle. The protein resides in the COPII-coated vesicle membrane. In terms of biological role, required for the assembly of the V0 complex of the vacuolar ATPase (V-ATPase) in the endoplasmic reticulum. In Debaryomyces hansenii (strain ATCC 36239 / CBS 767 / BCRC 21394 / JCM 1990 / NBRC 0083 / IGC 2968) (Yeast), this protein is Vacuolar ATPase assembly integral membrane protein VMA21.